The sequence spans 74 residues: UPF0352 protein PM1884 (74 aa).

Belongs to the UPF0352 family.

The chain is UPF0352 protein PM1884 from Pasteurella multocida (strain Pm70).